We begin with the raw amino-acid sequence, 455 residues long: Anthocyanidin 3-O-glucosyltransferase (455 aa).

The active-site Proton acceptor is histidine 18. An an anthocyanidin-binding site is contributed by histidine 18. Aspartate 118 serves as the catalytic Charge relay. Threonine 139 contacts UDP-alpha-D-glucose. An an anthocyanidin-binding site is contributed by histidine 148. UDP-alpha-D-glucose-binding residues include alanine 336, glutamine 338, histidine 353, tryptophan 356, serine 358, and glutamate 361. Position 376 (glycine 376) interacts with an anthocyanidin. Residues aspartate 377 and glutamine 378 each coordinate UDP-alpha-D-glucose.

It belongs to the UDP-glycosyltransferase family.

It catalyses the reaction an anthocyanidin + UDP-alpha-D-glucose + H(+) = an anthocyanidin 3-O-beta-D-glucoside + UDP. The protein operates within pigment biosynthesis; anthocyanin biosynthesis. In the presence of other necessary color factors, this glycosylation reaction allows the accumulation of anthocyanin pigments. This chain is Anthocyanidin 3-O-glucosyltransferase (BZ1), found in Hordeum vulgare (Barley).